The following is a 337-amino-acid chain: UPF0284 protein AF_0276 (337 aa).

Belongs to the UPF0284 family.

This Archaeoglobus fulgidus (strain ATCC 49558 / DSM 4304 / JCM 9628 / NBRC 100126 / VC-16) protein is UPF0284 protein AF_0276.